Reading from the N-terminus, the 123-residue chain is Small ribosomal subunit protein uS13 (123 aa).

Residues 92-123 (HRRGLPVRGQKTKTNARTRKGPKKLVVSRKKK) are disordered.

It belongs to the universal ribosomal protein uS13 family. Part of the 30S ribosomal subunit. Forms a loose heterodimer with protein S19. Forms two bridges to the 50S subunit in the 70S ribosome.

In terms of biological role, located at the top of the head of the 30S subunit, it contacts several helices of the 16S rRNA. In the 70S ribosome it contacts the 23S rRNA (bridge B1a) and protein L5 of the 50S subunit (bridge B1b), connecting the 2 subunits; these bridges are implicated in subunit movement. Contacts the tRNAs in the A and P-sites. This Clostridium tetani (strain Massachusetts / E88) protein is Small ribosomal subunit protein uS13.